The primary structure comprises 426 residues: Enolase (426 aa).

Glutamine 163 lines the (2R)-2-phosphoglycerate pocket. Residue glutamate 205 is the Proton donor of the active site. Mg(2+) contacts are provided by aspartate 242, glutamate 285, and aspartate 312. Positions 337, 366, 367, and 388 each coordinate (2R)-2-phosphoglycerate. Residue lysine 337 is the Proton acceptor of the active site.

This sequence belongs to the enolase family. Mg(2+) is required as a cofactor.

The protein localises to the cytoplasm. Its subcellular location is the secreted. It localises to the cell surface. The enzyme catalyses (2R)-2-phosphoglycerate = phosphoenolpyruvate + H2O. The protein operates within carbohydrate degradation; glycolysis; pyruvate from D-glyceraldehyde 3-phosphate: step 4/5. Functionally, catalyzes the reversible conversion of 2-phosphoglycerate (2-PG) into phosphoenolpyruvate (PEP). It is essential for the degradation of carbohydrates via glycolysis. The chain is Enolase from Caulobacter vibrioides (strain ATCC 19089 / CIP 103742 / CB 15) (Caulobacter crescentus).